Here is a 642-residue protein sequence, read N- to C-terminus: Wall-associated receptor kinase-like 6 (642 aa).

An N-terminal signal peptide occupies residues 1–28 (MKKTKTYQVFCIAALSVLTLQLINGSSA). Topologically, residues 29-357 (ATPPPPNSNS…PKITKPEKAS (329 aa)) are extracellular. N-linked (GlcNAc...) asparagine glycans are attached at residues Asn-37, Asn-72, Asn-95, Asn-137, Asn-216, Asn-240, and Asn-276. The segment at 289–346 (CSCEYDYFSGMSYRICYCNYGYTGNPYLRHGCIDIDECEGHHNCGEGTCVNMPGTHSC) is atypical EGF-like. Disulfide bonds link Cys-291-Cys-304, Cys-326-Cys-337, and Cys-332-Cys-346. Residues 358–378 (VLQGVLISLGVLLFVLGILGL) traverse the membrane as a helical segment. Over 379 to 642 (YKFIKKRTRI…KPLSRKRIGN (264 aa)) the chain is Cytoplasmic. The Protein kinase domain occupies 432 to 642 (FSMNRVLGQG…KPLSRKRIGN (211 aa)). ATP-binding positions include 438–446 (LGQGGQGTV) and Lys-460. Tyr-505 carries the post-translational modification Phosphotyrosine. Asp-559 (proton acceptor) is an active-site residue. Phosphothreonine is present on residues Thr-593 and Thr-598. Tyr-606 bears the Phosphotyrosine mark.

It belongs to the protein kinase superfamily. Ser/Thr protein kinase family. Slightly expressed in the whole plant.

It is found in the membrane. It catalyses the reaction L-seryl-[protein] + ATP = O-phospho-L-seryl-[protein] + ADP + H(+). It carries out the reaction L-threonyl-[protein] + ATP = O-phospho-L-threonyl-[protein] + ADP + H(+). In terms of biological role, serine/threonine-protein kinase that may function as a signaling receptor of extracellular matrix component. In Arabidopsis thaliana (Mouse-ear cress), this protein is Wall-associated receptor kinase-like 6 (WAKL6).